A 416-amino-acid polypeptide reads, in one-letter code: Muscle-specific homeobox protein tinman (416 aa).

Composition is skewed to polar residues over residues 1–11 and 18–33; these read MLQHHQQQAQS and YTQS…ADAL. Disordered stretches follow at residues 1–33, 246–305, and 391–416; these read MLQH…ADAL, TASN…RKPR, and VMWP…MQHM. Residues 281–295 are compositionally biased toward low complexity; sequence NSISGNSNPGSNSGS. Residues 301–360 constitute a DNA-binding region (homeobox); that stretch reads KRKPRVLFSQAQVLELECRFRLKKYLTGAEREIIAQKLNLSATQVKIWFQNRRYKSKRGD. A compositionally biased stretch (low complexity) spans 397-416; sequence MQQSQQQQQHHAQQQQMQHM.

The protein localises to the nucleus. Functionally, required for the development of heart and visceral muscle; for the formation of somatic muscles. Has a crucial function in the early mesodermal subdivisions. The polypeptide is Muscle-specific homeobox protein tinman (tin) (Drosophila melanogaster (Fruit fly)).